Consider the following 436-residue polypeptide: Tol-Pal system protein TolB (436 aa).

A signal peptide spans M1–A28.

This sequence belongs to the TolB family. The Tol-Pal system is composed of five core proteins: the inner membrane proteins TolA, TolQ and TolR, the periplasmic protein TolB and the outer membrane protein Pal. They form a network linking the inner and outer membranes and the peptidoglycan layer.

It localises to the periplasm. Its function is as follows. Part of the Tol-Pal system, which plays a role in outer membrane invagination during cell division and is important for maintaining outer membrane integrity. The polypeptide is Tol-Pal system protein TolB (Rhizobium meliloti (strain 1021) (Ensifer meliloti)).